Here is a 480-residue protein sequence, read N- to C-terminus: Thiamine biosynthesis bifunctional protein ThiM/ThiE (480 aa).

The segment at 1-287 (MSTLPERVRE…LYVLVSGATP (287 aa)) is hydroxyethylthiazole kinase. Met-40 provides a ligand contact to 5-(2-hydroxyethyl)-4-methylthiazole. 2 residues coordinate ATP: Arg-116 and Thr-164. Position 191 (Gly-191) interacts with 5-(2-hydroxyethyl)-4-methylthiazole. Residues 288–480 (PDVLEAVLQA…VRRAKGEVSA (193 aa)) form a thiamine-phosphate synthase region. 4-amino-2-methyl-5-(diphosphooxymethyl)pyrimidine is bound by residues 303-307 (QFREK) and Asn-335. Mg(2+) contacts are provided by Asp-336 and Asp-355. Thr-374 is a binding site for 4-amino-2-methyl-5-(diphosphooxymethyl)pyrimidine. 400-402 (TPS) contacts 2-[(2R,5Z)-2-carboxy-4-methylthiazol-5(2H)-ylidene]ethyl phosphate. Residue Lys-403 participates in 4-amino-2-methyl-5-(diphosphooxymethyl)pyrimidine binding. 2-[(2R,5Z)-2-carboxy-4-methylthiazol-5(2H)-ylidene]ethyl phosphate-binding positions include Gly-431 and 451–452 (IS).

In the N-terminal section; belongs to the Thz kinase family. The protein in the C-terminal section; belongs to the thiamine-phosphate synthase family. It depends on Mg(2+) as a cofactor.

It carries out the reaction 5-(2-hydroxyethyl)-4-methylthiazole + ATP = 4-methyl-5-(2-phosphooxyethyl)-thiazole + ADP + H(+). The enzyme catalyses 2-[(2R,5Z)-2-carboxy-4-methylthiazol-5(2H)-ylidene]ethyl phosphate + 4-amino-2-methyl-5-(diphosphooxymethyl)pyrimidine + 2 H(+) = thiamine phosphate + CO2 + diphosphate. The catalysed reaction is 2-(2-carboxy-4-methylthiazol-5-yl)ethyl phosphate + 4-amino-2-methyl-5-(diphosphooxymethyl)pyrimidine + 2 H(+) = thiamine phosphate + CO2 + diphosphate. It catalyses the reaction 4-methyl-5-(2-phosphooxyethyl)-thiazole + 4-amino-2-methyl-5-(diphosphooxymethyl)pyrimidine + H(+) = thiamine phosphate + diphosphate. The protein operates within cofactor biosynthesis; thiamine diphosphate biosynthesis; 4-methyl-5-(2-phosphoethyl)-thiazole from 5-(2-hydroxyethyl)-4-methylthiazole: step 1/1. It participates in cofactor biosynthesis; thiamine diphosphate biosynthesis; thiamine phosphate from 4-amino-2-methyl-5-diphosphomethylpyrimidine and 4-methyl-5-(2-phosphoethyl)-thiazole: step 1/1. Its function is as follows. Condenses 4-methyl-5-(beta-hydroxyethyl)thiazole monophosphate (THZ-P) and 2-methyl-4-amino-5-hydroxymethyl pyrimidine pyrophosphate (HMP-PP) to form thiamine monophosphate (TMP). This is Thiamine biosynthesis bifunctional protein ThiM/ThiE (thiM/thiE) from Symbiobacterium thermophilum (strain DSM 24528 / JCM 14929 / IAM 14863 / T).